Reading from the N-terminus, the 340-residue chain is Insulin gene enhancer protein ISL-2B (340 aa).

2 LIM zinc-binding domains span residues 9-62 (CVGC…CKRD) and 71-125 (CAKC…RADH). The segment at residues 172-231 (TTRVRTVLNEKQLHTLRTCYNANPRPDALMKEQLVEMTGLSPRVIRVWFQNKRCKDKKRT) is a DNA-binding region (homeobox). The segment covering 307–317 (ESGSMGNSSGS) has biased composition (low complexity). The tract at residues 307–340 (ESGSMGNSSGSDVTSLSSQLPDTPNSMVPSPMDT) is disordered. A compositionally biased stretch (polar residues) spans 318–340 (DVTSLSSQLPDTPNSMVPSPMDT).

It is found in the nucleus. In terms of biological role, binds to one of the cis-acting domain of the insulin gene enhancer. May be involved in subtype specialization of primary motoneurons. The chain is Insulin gene enhancer protein ISL-2B (isl2b) from Oncorhynchus tshawytscha (Chinook salmon).